We begin with the raw amino-acid sequence, 507 residues long: Germ cell nuclear acidic protein (507 aa).

The segment covering 1–51 (MDSGSSSSSSSSGSSSGSCSTSGSGSTSGSSTTSSSSSSSSSSSSSSSSSS) has biased composition (low complexity). A disordered region spans residues 1–507 (MDSGSSSSSS…GRGRGAKAGK (507 aa)). Short sequence motifs (SUMO interaction motif 1 (SIM)) lie at residues 12 to 15 (SGSS), 66 to 69 (CVVI), 86 to 89 (VCEI), and 108 to 111 (LIVI). Basic and acidic residues-rich tracts occupy residues 122–141 (KNTK…KEGV), 179–354 (SEAK…KGEM), and 431–449 (PQDR…RGDS). A compositionally biased stretch (basic residues) spans 480 to 507 (GRGRGRGRGRGRGRGRGRGRGRGAKAGK).

Belongs to the serine-aspartate repeat-containing protein (SDr) family. As to quaternary structure, interacts (via SIM domains) with SUMO2; this interaction allows the GCNA recruitment to DPCs sites. Interacts with TOP2A; this interaction allows the resolution of topoisomerase II (TOP2A) DNA-protein cross-links. Germ-cells specific.

It localises to the chromosome. Its subcellular location is the nucleus. The protein resides in the PML body. In terms of biological role, may play a role in DNA-protein cross-links (DPCs) clearance through a SUMO-dependent recruitment to sites of DPCs, ensuring the genomic stability by protecting germ cells and early embryos from various sources of damage. Can resolve the topoisomerase II (TOP2A) DPCs. This chain is Germ cell nuclear acidic protein, found in Mus musculus (Mouse).